A 431-amino-acid chain; its full sequence is Ribonuclease TTHA0252 (431 aa).

7 residues coordinate Zn(2+): H59, H61, D63, H64, H141, D162, and H400.

This sequence belongs to the metallo-beta-lactamase superfamily. RNA-metabolizing metallo-beta-lactamase-like family. In terms of assembly, monomer. Zn(2+) is required as a cofactor.

It is found in the cytoplasm. Inhibited by cadmium, cobalt, manganese, magnesium, calcium and nickel ions. Has endoribonuclease activity towards 23S and 16S rRNA (in vitro). The polypeptide is Ribonuclease TTHA0252 (Thermus thermophilus (strain ATCC 27634 / DSM 579 / HB8)).